We begin with the raw amino-acid sequence, 364 residues long: Methylthioribose-1-phosphate isomerase (364 aa).

Substrate-binding positions include 53–55, Arg-90, and Gln-200; that span reads RGA. The Proton donor role is filled by Asp-241. Substrate is bound at residue 251-252; the sequence is NK.

The protein belongs to the eIF-2B alpha/beta/delta subunits family. MtnA subfamily.

It carries out the reaction 5-(methylsulfanyl)-alpha-D-ribose 1-phosphate = 5-(methylsulfanyl)-D-ribulose 1-phosphate. It participates in amino-acid biosynthesis; L-methionine biosynthesis via salvage pathway; L-methionine from S-methyl-5-thio-alpha-D-ribose 1-phosphate: step 1/6. Its function is as follows. Catalyzes the interconversion of methylthioribose-1-phosphate (MTR-1-P) into methylthioribulose-1-phosphate (MTRu-1-P). In Methylobacterium nodulans (strain LMG 21967 / CNCM I-2342 / ORS 2060), this protein is Methylthioribose-1-phosphate isomerase.